A 318-amino-acid polypeptide reads, in one-letter code: Nodulation protein D 2 (318 aa).

One can recognise an HTH lysR-type domain in the interval L6–T63. The segment at residues L23–G42 is a DNA-binding region (H-T-H motif).

It belongs to the LysR transcriptional regulatory family.

Its function is as follows. NodD regulates the expression of the nodABCFE genes which encode other nodulation proteins. NodD is also a negative regulator of its own expression. Binds flavonoids as inducers. This Rhizobium leguminosarum bv. phaseoli protein is Nodulation protein D 2 (nodD2).